Consider the following 407-residue polypeptide: Phosphopentomutase (407 aa).

6 residues coordinate Mn(2+): Asp-10, Asp-306, His-311, Asp-347, His-348, and His-359.

The protein belongs to the phosphopentomutase family. Mn(2+) is required as a cofactor.

It is found in the cytoplasm. It catalyses the reaction 2-deoxy-alpha-D-ribose 1-phosphate = 2-deoxy-D-ribose 5-phosphate. It carries out the reaction alpha-D-ribose 1-phosphate = D-ribose 5-phosphate. It functions in the pathway carbohydrate degradation; 2-deoxy-D-ribose 1-phosphate degradation; D-glyceraldehyde 3-phosphate and acetaldehyde from 2-deoxy-alpha-D-ribose 1-phosphate: step 1/2. In terms of biological role, isomerase that catalyzes the conversion of deoxy-ribose 1-phosphate (dRib-1-P) and ribose 1-phosphate (Rib-1-P) to deoxy-ribose 5-phosphate (dRib-5-P) and ribose 5-phosphate (Rib-5-P), respectively. The sequence is that of Phosphopentomutase from Photorhabdus laumondii subsp. laumondii (strain DSM 15139 / CIP 105565 / TT01) (Photorhabdus luminescens subsp. laumondii).